The chain runs to 403 residues: Peroxisomal membrane protein PEX13 (403 aa).

Residues 1 to 11 show a composition bias toward pro residues; that stretch reads MASQPPPPPKP. Residues 1-69 form a disordered region; it reads MASQPPPPPK…SQQTGSGNLN (69 aa). Over 1–134 the chain is Peroxisomal matrix; that stretch reads MASQPPPPPK…SSRGAFQSIE (134 aa). The segment covering 59-69 has biased composition (polar residues); sequence PSQQTGSGNLN. A helical membrane pass occupies residues 135 to 155; the sequence is SIVHAFASVSMMMDATFSAVY. The targeting to peroxisomes stretch occupies residues 145-233; the sequence is MMMDATFSAV…EDRAANSAKS (89 aa). At 156–174 the chain is on the cytoplasmic side; the sequence is NSFRAVLDVANHFSRLKIH. Residues 175 to 192 form a helical membrane-spanning segment; that stretch reads FTKVFSAFALVRTIRYLY. The tract at residues 175–196 is interaction with PEX19; the sequence is FTKVFSAFALVRTIRYLYRRLQ. Over 193-233 the chain is Peroxisomal matrix; sequence RRLQWMIGLRRGLENEDLWAESEGTVACLGAEDRAANSAKS. Residues 234-254 traverse the membrane as a helical segment; it reads WPIFLFFAVILGGPYLIWKLL. Over 255 to 403 the chain is Cytoplasmic; the sequence is STHSDEVTDS…TGKNGDKQDL (149 aa). The 65-residue stretch at 272 to 336 folds into the SH3 domain; the sequence is DDHVVARAEY…PANYVKILGK (65 aa). S354 carries the phosphoserine modification.

This sequence belongs to the peroxin-13 family. Interacts (via SH3 domain) with PEX14 (via SH3-binding motif); forming the PEX13-PEX14 docking complex. Interacts with PEX19.

Its subcellular location is the peroxisome membrane. Its function is as follows. Component of the PEX13-PEX14 docking complex, a translocon channel that specifically mediates the import of peroxisomal cargo proteins bound to PEX5 receptor. The PEX13-PEX14 docking complex forms a large import pore which can be opened to a diameter of about 9 nm. Mechanistically, PEX5 receptor along with cargo proteins associates with the PEX14 subunit of the PEX13-PEX14 docking complex in the cytosol, leading to the insertion of the receptor into the organelle membrane with the concomitant translocation of the cargo into the peroxisome matrix. Involved in the import of PTS1- and PTS2-type containing proteins. This Bos taurus (Bovine) protein is Peroxisomal membrane protein PEX13 (PEX13).